The chain runs to 218 residues: Elongation factor Ts (218 aa).

The tract at residues 82 to 85 (TDFV) is involved in Mg(2+) ion dislocation from EF-Tu.

This sequence belongs to the EF-Ts family.

It localises to the cytoplasm. In terms of biological role, associates with the EF-Tu.GDP complex and induces the exchange of GDP to GTP. It remains bound to the aminoacyl-tRNA.EF-Tu.GTP complex up to the GTP hydrolysis stage on the ribosome. The sequence is that of Elongation factor Ts from Prochlorococcus marinus (strain MIT 9211).